Reading from the N-terminus, the 226-residue chain is 7-carboxy-7-deazaguanine synthase (226 aa).

Substrate contacts are provided by residues 10–12 (LQG) and arginine 25. In terms of domain architecture, Radical SAM core spans 16–221 (YTGIPCIFVR…LQTHKFIWTP (206 aa)). Positions 29, 33, and 36 each coordinate [4Fe-4S] cluster. Serine 38 contributes to the Mg(2+) binding site. Threonine 69 serves as a coordination point for substrate. Glycine 71 contacts S-adenosyl-L-methionine.

This sequence belongs to the radical SAM superfamily. 7-carboxy-7-deazaguanine synthase family. In terms of assembly, homodimer. Requires [4Fe-4S] cluster as cofactor. S-adenosyl-L-methionine is required as a cofactor. The cofactor is Mg(2+).

It catalyses the reaction 6-carboxy-5,6,7,8-tetrahydropterin + H(+) = 7-carboxy-7-deazaguanine + NH4(+). It functions in the pathway purine metabolism; 7-cyano-7-deazaguanine biosynthesis. Its function is as follows. Catalyzes the complex heterocyclic radical-mediated conversion of 6-carboxy-5,6,7,8-tetrahydropterin (CPH4) to 7-carboxy-7-deazaguanine (CDG), a step common to the biosynthetic pathways of all 7-deazapurine-containing compounds. The protein is 7-carboxy-7-deazaguanine synthase of Koribacter versatilis (strain Ellin345).